The following is a 372-amino-acid chain: Chaperone protein DnaJ (372 aa).

In terms of domain architecture, J spans 5 to 70 (DYYDLLEVGR…EKRAGYDRYG (66 aa)). A CR-type zinc finger spans residues 134-212 (GIQAPIHYVT…CGGSGRRRDE (79 aa)). Zn(2+) is bound by residues Cys147, Cys150, Cys164, Cys167, Cys186, Cys189, Cys200, and Cys203. CXXCXGXG motif repeat units follow at residues 147 to 154 (CDTCQGTG), 164 to 171 (CHTCQGSG), 186 to 193 (CTTCYGEG), and 200 to 207 (CKKCGGSG).

Belongs to the DnaJ family. Homodimer. It depends on Zn(2+) as a cofactor.

It is found in the cytoplasm. In terms of biological role, participates actively in the response to hyperosmotic and heat shock by preventing the aggregation of stress-denatured proteins and by disaggregating proteins, also in an autonomous, DnaK-independent fashion. Unfolded proteins bind initially to DnaJ; upon interaction with the DnaJ-bound protein, DnaK hydrolyzes its bound ATP, resulting in the formation of a stable complex. GrpE releases ADP from DnaK; ATP binding to DnaK triggers the release of the substrate protein, thus completing the reaction cycle. Several rounds of ATP-dependent interactions between DnaJ, DnaK and GrpE are required for fully efficient folding. Also involved, together with DnaK and GrpE, in the DNA replication of plasmids through activation of initiation proteins. The sequence is that of Chaperone protein DnaJ from Wolbachia pipientis wMel.